A 130-amino-acid chain; its full sequence is Small ribosomal subunit protein uS8 (130 aa).

Belongs to the universal ribosomal protein uS8 family. Part of the 30S ribosomal subunit.

One of the primary rRNA binding proteins, it binds directly to 16S rRNA central domain where it helps coordinate assembly of the platform of the 30S subunit. The polypeptide is Small ribosomal subunit protein uS8 (Methanothermobacter thermautotrophicus (strain ATCC 29096 / DSM 1053 / JCM 10044 / NBRC 100330 / Delta H) (Methanobacterium thermoautotrophicum)).